Reading from the N-terminus, the 425-residue chain is Glyco-Gag protein (425 aa).

Residues 1 to 54 lie on the Cytoplasmic side of the membrane; sequence MSRASSGTATGARLFGISSVLGEYRVLIGDEGAGPSRSPSEVSFSVWYRSRAAR. A helical transmembrane segment spans residues 55 to 75; the sequence is LVIVCLVASFLVPCLTFLIAE. Residues 76-425 are Extracellular-facing; that stretch reads TVMGQTITTP…VVQGKEETPA (350 aa). Asn-137 carries an N-linked (GlcNAc...) asparagine; by host glycan. The tract at residues 174–285 is disordered; it reads VRPFLPPPKP…LREGPNNRPQ (112 aa). The span at 177-196 shows a compositional bias: pro residues; it reads FLPPPKPPTSLPQPLSPQPS. Low complexity predominate over residues 197 to 209; the sequence is APLTSSLYPVLPK. 2 stretches are compositionally biased toward pro residues: residues 213–223 and 233–248; these read PKPPVLPPDPS and EPPPYPGGHGPPPSGP.

Glycosylated by host. Post-translationally, cleaved by host near the middle of the molecule, releasing the c-terminal half containing capsid and nucleoprotein domains op GAG.

It localises to the host cell membrane. In terms of biological role, plays a role in viral particle release. Presumably acts by facilitating the fission of the virion bud at the cell surface. In Felidae (cat family), this protein is Glyco-Gag protein.